We begin with the raw amino-acid sequence, 345 residues long: MGPCGALGLGLLLAAVCGAAAPELHTLRYIQTAMTDPGPGQPWFVTVGYVDGELFVHYNSTARRYVPRTEWIAAKADQQYWDGQTQIGQGNEQIDRENLGILQRRYNQTGGSHTVQWMYGCDILEGGPIRGYYQMAYDGRDFTAFDKGTMTFTAAVPEAVPTKRKWEEESEPERWKNYLEETCVEWLRRYVEYGKAELGRRERPEVRVWGKEADGILTLSCRAHGFYPRPIVVSWLKDGAVRGQDAHSGGIVPNGDGTYHTWVTIDAQPGDGDKYQCRVEHASLPQPGLYSWEPPQPNLVPIVAGVAVAIVAIAIMVGVGFIIYRRHAGKKGKGYNIAPGSNPAI.

The signal sequence occupies residues 1–22 (MGPCGALGLGLLLAAVCGAAAP). Residues 23 to 110 (ELHTLRYIQT…ILQRRYNQTG (88 aa)) are alpha-1. At 23–301 (ELHTLRYIQT…WEPPQPNLVP (279 aa)) the chain is on the extracellular side. 2 N-linked (GlcNAc...) asparagine glycosylation sites follow: Asn-59 and Asn-107. Residues 111–201 (GSHTVQWMYG…EYGKAELGRR (91 aa)) form an alpha-2 region. Disulfide bonds link Cys-121/Cys-183 and Cys-221/Cys-277. Positions 202–292 (ERPEVRVWGK…SLPQPGLYSW (91 aa)) are alpha-3. The 90-residue stretch at 204–293 (PEVRVWGKEA…LPQPGLYSWE (90 aa)) folds into the Ig-like C1-type domain. Residues 293–301 (EPPQPNLVP) are connecting peptide. Residues 302–324 (IVAGVAVAIVAIAIMVGVGFIIY) form a helical membrane-spanning segment. The Cytoplasmic segment spans residues 325–345 (RRHAGKKGKGYNIAPGSNPAI).

This sequence belongs to the MHC class I family. As to quaternary structure, heterodimer of an alpha chain and a beta chain (beta-2-microglobulin).

It localises to the membrane. In terms of biological role, involved in the presentation of foreign antigens to the immune system. The protein is Class I histocompatibility antigen, F10 alpha chain of Gallus gallus (Chicken).